The chain runs to 261 residues: Carnitinyl-CoA dehydratase (261 aa).

Glutamate 111 serves as the catalytic Nucleophile. Glutamate 131 functions as the Proton acceptor in the catalytic mechanism.

The protein belongs to the enoyl-CoA hydratase/isomerase family.

It carries out the reaction (R)-carnitinyl-CoA = crotonobetainyl-CoA + H2O. It participates in amine and polyamine metabolism; carnitine metabolism. In terms of biological role, catalyzes the reversible dehydration of L-carnitinyl-CoA to crotonobetainyl-CoA. The protein is Carnitinyl-CoA dehydratase of Escherichia coli O157:H7.